We begin with the raw amino-acid sequence, 331 residues long: Inactive serine/threonine-protein kinase BKN1 (331 aa).

Gly-2 carries the N-myristoyl glycine lipid modification. The S-palmitoyl cysteine moiety is linked to residue Cys-4. One can recognise a Protein kinase domain in the interval Asp-58–Glu-328.

The protein belongs to the protein kinase superfamily. Ser/Thr protein kinase family. Restricted to stigma in flowers.

It is found in the cell membrane. The protein resides in the nucleus. Collaboratively with BKN2/SZE2, involved in compatible pollen-stigma interactions. The chain is Inactive serine/threonine-protein kinase BKN1 from Arabidopsis thaliana (Mouse-ear cress).